Here is a 425-residue protein sequence, read N- to C-terminus: Ribosome biogenesis protein WDR12 homolog (425 aa).

The ubiquitin-like (UBL) domain stretch occupies residues 13-94 (LQLHLITKQK…EDTVELEYVE (82 aa)). 7 WD repeats span residues 106–143 (LHDD…KLTI), 145–187 (GHIA…NSVE), 194–233 (GHER…GGGD), 258–296 (GHRE…IKSE), 298–337 (SGNK…GTLV), 343–383 (GHTQ…APIF), and 387–425 (GHED…GGEK). The interval 227-247 (VRSGGGDSEPSTSKRQKLDQG) is disordered.

The protein belongs to the WD repeat WDR12/YTM1 family.

The protein localises to the nucleus. Its subcellular location is the nucleolus. The protein resides in the nucleoplasm. Its function is as follows. Required for maturation of ribosomal RNAs and formation of the large ribosomal subunit. This is Ribosome biogenesis protein WDR12 homolog from Culex quinquefasciatus (Southern house mosquito).